The sequence spans 491 residues: Nucleoside transporter 1.2 (491 aa).

The next 6 membrane-spanning stretches (helical) occupy residues 27–47 (FYVY…VNAV), 82–102 (YNLI…LSWF), 109–129 (VRLL…MVVP), 136–156 (AGAV…KSIF), 173–193 (STMM…QIIV), and 209–229 (KIYY…LILL). Basic and acidic residues predominate over residues 261 to 273 (HTDEHPTHDKEGR). 2 disordered regions span residues 261–280 (HTDE…SGKE) and 290–309 (AAAK…PHEV). Asn274 carries an N-linked (GlcNAc...) asparagine glycan. 5 helical membrane passes run 333–353 (MFVA…GIAV), 361–381 (WFST…RFSP), 395–415 (WIIV…LLHS), 427–447 (VMEV…LVLG), and 460–480 (FVAG…GTVL).

It belongs to the SLC29A/ENT transporter (TC 2.A.57) family.

The protein resides in the membrane. The catalysed reaction is adenosine(in) + H(+)(in) = adenosine(out) + H(+)(out). It catalyses the reaction uridine(in) + H(+)(in) = uridine(out) + H(+)(out). Its function is as follows. Sodium-independent nucleoside:H(+) symporter; transports adenosine with high affinity and uridine with moderate affinity. Can transport cytidine and thymidine. The polypeptide is Nucleoside transporter 1.2 (Leishmania donovani).